The chain runs to 336 residues: ATP-dependent 6-phosphofructokinase 3 (336 aa).

Residues Gly10, Arg72–Glu73, and Gly108–Thr111 contribute to the ATP site. Asn109 provides a ligand contact to Mg(2+). Substrate is bound by residues Thr131–Asp133, Arg168, Met175–His177, Glu228, Arg255, and Tyr261–Arg264. Asp133 (proton acceptor) is an active-site residue.

This sequence belongs to the phosphofructokinase type A (PFKA) family. Mixed-substrate PFK group III subfamily. Homodimer or homotetramer. The cofactor is Mg(2+).

Its subcellular location is the cytoplasm. The enzyme catalyses beta-D-fructose 6-phosphate + ATP = beta-D-fructose 1,6-bisphosphate + ADP + H(+). The protein operates within carbohydrate degradation; glycolysis; D-glyceraldehyde 3-phosphate and glycerone phosphate from D-glucose: step 3/4. Functionally, catalyzes the phosphorylation of D-fructose 6-phosphate to fructose 1,6-bisphosphate by ATP, the first committing step of glycolysis. This Bacteroides thetaiotaomicron (strain ATCC 29148 / DSM 2079 / JCM 5827 / CCUG 10774 / NCTC 10582 / VPI-5482 / E50) protein is ATP-dependent 6-phosphofructokinase 3.